Here is a 309-residue protein sequence, read N- to C-terminus: 2-oxoacid:ferredoxin oxidoreductase 2, subunit beta (309 aa).

C17, C20, and C51 together coordinate [4Fe-4S] cluster. Thiamine diphosphate contacts are provided by residues I49–S52 and H68. Residue D93 coordinates Mg(2+). Residue G94–D95 participates in thiamine diphosphate binding. Residues N121 and V123 each coordinate Mg(2+). G125–L126 serves as a coordination point for thiamine diphosphate. A [4Fe-4S] cluster-binding site is contributed by C200.

Heterodimer composed of an alpha and a beta subunit. Requires [4Fe-4S] cluster as cofactor. The cofactor is thiamine diphosphate. It depends on Mg(2+) as a cofactor.

The catalysed reaction is a 2-oxocarboxylate + 2 oxidized [2Fe-2S]-[ferredoxin] + CoA = an acyl-CoA + 2 reduced [2Fe-2S]-[ferredoxin] + CO2 + H(+). Catalyzes the coenzyme A-dependent oxidative decarboxylation of different 2-oxoacids such as pyruvate, 2-oxobutyrate, glyoxylate and 2-oxoglutarate to form their CoA derivatives. This Aeropyrum pernix (strain ATCC 700893 / DSM 11879 / JCM 9820 / NBRC 100138 / K1) protein is 2-oxoacid:ferredoxin oxidoreductase 2, subunit beta.